The primary structure comprises 808 residues: ATP-dependent 6-phosphofructokinase (808 aa).

Residues 1–21 (MSSTQAPVEPPKRRRIGVLTS) form a disordered region. The segment at 1 to 389 (MSSTQAPVEP…YHFAYRNTAT (389 aa)) is N-terminal catalytic PFK domain 1. ATP contacts are provided by residues Gly-23, 86-87 (RS), and 116-119 (GDGS). Asp-117 contributes to the Mg(2+) binding site. Substrate is bound by residues 162 to 164 (SID), Arg-199, 206 to 208 (MGR), Glu-263, Arg-291, and 297 to 300 (HTQR). Asp-164 acts as the Proton acceptor in catalysis. Residues 390 to 403 (PDHPKMILPQDKRM) are interdomain linker. The C-terminal regulatory PFK domain 2 stretch occupies residues 404–808 (RIAIIHVGAP…DIDPSALTSS (405 aa)). Beta-D-fructose 2,6-bisphosphate is bound by residues Arg-480, 537 to 541 (TISNN), Arg-575, 582 to 584 (QGG), Glu-642, Arg-668, 674 to 677 (HFQQ), and Arg-749.

Belongs to the phosphofructokinase type A (PFKA) family. ATP-dependent PFK group I subfamily. Eukaryotic two domain clade 'E' sub-subfamily. In terms of assembly, homotetramer. Mg(2+) serves as cofactor.

The protein localises to the cytoplasm. It carries out the reaction beta-D-fructose 6-phosphate + ATP = beta-D-fructose 1,6-bisphosphate + ADP + H(+). Its pathway is carbohydrate degradation; glycolysis; D-glyceraldehyde 3-phosphate and glycerone phosphate from D-glucose: step 3/4. Allosterically activated by ADP, AMP, or fructose 2,6-bisphosphate, and allosterically inhibited by ATP or citrate. Functionally, catalyzes the phosphorylation of D-fructose 6-phosphate to fructose 1,6-bisphosphate by ATP, the first committing step of glycolysis. This chain is ATP-dependent 6-phosphofructokinase (pfkA), found in Aspergillus fumigatus (strain ATCC MYA-4609 / CBS 101355 / FGSC A1100 / Af293) (Neosartorya fumigata).